The chain runs to 397 residues: tRNA(Met) cytidine acetate ligase (397 aa).

ATP is bound by residues 7 to 20 (VTEYNPFHNGHIYH), glycine 101, asparagine 152, and arginine 177.

It belongs to the TmcAL family.

It localises to the cytoplasm. It carries out the reaction cytidine(34) in elongator tRNA(Met) + acetate + ATP = N(4)-acetylcytidine(34) in elongator tRNA(Met) + AMP + diphosphate. In terms of biological role, catalyzes the formation of N(4)-acetylcytidine (ac(4)C) at the wobble position of elongator tRNA(Met), using acetate and ATP as substrates. First activates an acetate ion to form acetyladenylate (Ac-AMP) and then transfers the acetyl group to tRNA to form ac(4)C34. In Leuconostoc citreum (strain KM20), this protein is tRNA(Met) cytidine acetate ligase.